A 138-amino-acid chain; its full sequence is Transcription antitermination protein NusB (138 aa).

It belongs to the NusB family.

In terms of biological role, involved in transcription antitermination. Required for transcription of ribosomal RNA (rRNA) genes. Binds specifically to the boxA antiterminator sequence of the ribosomal RNA (rrn) operons. The protein is Transcription antitermination protein NusB of Helicobacter pylori (strain Shi470).